We begin with the raw amino-acid sequence, 282 residues long: MGQENSKCPHQSLAEKRYKVERPKTKKVSSGSATERCLSTQSDEKNAARRLTVSSCDVSAEDDLPEIKKLSVCEPNEDEATSMTNAAAAAGGAKSKCKHFLTRRERILLEQSWRKTRKTGADHIGSKIFFMVLTAQPDIKAIFGLEKIPTGRLKYDPRFRQHALVYTKTLDFVIRNLDYPGKLEVYFENLGKRHVAMQGRGFEPGYWETFAECMTQAAVEWEANRQRPTLGAWRNLISCIISFMRRGFDEENGKKKQYSYNVQGFSSNRARRSISPYAPGVH.

The segment at 1 to 46 (MGQENSKCPHQSLAEKRYKVERPKTKKVSSGSATERCLSTQSDEKN) is disordered. Over residues 13–23 (LAEKRYKVERP) the composition is skewed to basic and acidic residues. A compositionally biased stretch (polar residues) spans 28-41 (VSSGSATERCLSTQ). Positions 100-249 (FLTRRERILL…IISFMRRGFD (150 aa)) constitute a Globin domain. The heme b site is built by H162 and H194.

It belongs to the globin family.

Its function is as follows. Involved in oxidative stress resistance. This chain is Globin-related protein glb-13, found in Caenorhabditis elegans.